The chain runs to 140 residues: Putative nickel-responsive regulator 2 (140 aa).

4 residues coordinate Ni(2+): H81, H92, H94, and C100.

The protein belongs to the transcriptional regulatory CopG/NikR family. Ni(2+) serves as cofactor.

Its function is as follows. Transcriptional regulator. This chain is Putative nickel-responsive regulator 2, found in Methanosarcina acetivorans (strain ATCC 35395 / DSM 2834 / JCM 12185 / C2A).